The primary structure comprises 250 residues: Hydroxyethylthiazole kinase (250 aa).

Residue Met39 coordinates substrate. ATP-binding residues include Arg114 and Thr159. Gly186 contacts substrate.

The protein belongs to the Thz kinase family. Mg(2+) is required as a cofactor.

It carries out the reaction 5-(2-hydroxyethyl)-4-methylthiazole + ATP = 4-methyl-5-(2-phosphooxyethyl)-thiazole + ADP + H(+). The protein operates within cofactor biosynthesis; thiamine diphosphate biosynthesis; 4-methyl-5-(2-phosphoethyl)-thiazole from 5-(2-hydroxyethyl)-4-methylthiazole: step 1/1. Catalyzes the phosphorylation of the hydroxyl group of 4-methyl-5-beta-hydroxyethylthiazole (THZ). The polypeptide is Hydroxyethylthiazole kinase (Lactococcus lactis subsp. lactis (strain IL1403) (Streptococcus lactis)).